The sequence spans 129 residues: 3-aminoacrylate deaminase RutC (129 aa).

It belongs to the RutC family.

The catalysed reaction is (Z)-3-aminoacrylate + H2O + H(+) = 3-oxopropanoate + NH4(+). In terms of biological role, involved in pyrimidine catabolism. Catalyzes the deamination of 3-aminoacrylate to malonic semialdehyde, a reaction that can also occur spontaneously. RutC may facilitate the reaction and modulate the metabolic fitness, rather than catalyzing essential functions. In Caulobacter vibrioides (strain ATCC 19089 / CIP 103742 / CB 15) (Caulobacter crescentus), this protein is 3-aminoacrylate deaminase RutC.